The following is a 387-amino-acid chain: UDP-N-acetylglucosamine--N-acetylmuramyl-(pentapeptide) pyrophosphoryl-undecaprenol N-acetylglucosamine transferase (387 aa).

Residues 14-16 (TGG), asparagine 124, arginine 167, serine 195, and glutamine 296 contribute to the UDP-N-acetyl-alpha-D-glucosamine site. A disordered region spans residues 366-387 (LPQQNSIEEDSTFEKNQEGAVA). The segment covering 377-387 (TFEKNQEGAVA) has biased composition (basic and acidic residues).

It belongs to the glycosyltransferase 28 family. MurG subfamily.

The protein resides in the cell inner membrane. It catalyses the reaction di-trans,octa-cis-undecaprenyl diphospho-N-acetyl-alpha-D-muramoyl-L-alanyl-D-glutamyl-meso-2,6-diaminopimeloyl-D-alanyl-D-alanine + UDP-N-acetyl-alpha-D-glucosamine = di-trans,octa-cis-undecaprenyl diphospho-[N-acetyl-alpha-D-glucosaminyl-(1-&gt;4)]-N-acetyl-alpha-D-muramoyl-L-alanyl-D-glutamyl-meso-2,6-diaminopimeloyl-D-alanyl-D-alanine + UDP + H(+). It participates in cell wall biogenesis; peptidoglycan biosynthesis. Functionally, cell wall formation. Catalyzes the transfer of a GlcNAc subunit on undecaprenyl-pyrophosphoryl-MurNAc-pentapeptide (lipid intermediate I) to form undecaprenyl-pyrophosphoryl-MurNAc-(pentapeptide)GlcNAc (lipid intermediate II). The sequence is that of UDP-N-acetylglucosamine--N-acetylmuramyl-(pentapeptide) pyrophosphoryl-undecaprenol N-acetylglucosamine transferase from Zymomonas mobilis subsp. mobilis (strain ATCC 31821 / ZM4 / CP4).